We begin with the raw amino-acid sequence, 277 residues long: Ubiquitin-conjugating enzyme suppressor 1 (277 aa).

The disordered stretch occupies residues 254–277 (RTLACPDETNDNRGSEHYTKRKKI).

Its function is as follows. Not known; its elevated expression suppresses the conditional cell cycle defects associated with UBC3/CDC34 mutations. This chain is Ubiquitin-conjugating enzyme suppressor 1 (UBS1), found in Saccharomyces cerevisiae (strain ATCC 204508 / S288c) (Baker's yeast).